A 566-amino-acid polypeptide reads, in one-letter code: MOB kinase activator-like 2 (566 aa).

Disordered regions lie at residues 28–57 (ADAT…SSLS) and 74–118 (GRAV…GAQA). Positions 35-57 (SSTAPQTPTASTPRPSSSHSSLS) are enriched in low complexity. Gly residues predominate over residues 85–115 (QNGGKGNASGAGGGAGGGGAGGASGGTGGTG). 4 residues coordinate Zn(2+): Cys-209, Cys-214, His-289, and His-294. 2 disordered regions span residues 346-407 (GGCQ…SASA) and 498-541 (FSNN…QCNA). The span at 367–388 (LQHQSLQQQQQHHNSSSNSTSS) shows a compositional bias: low complexity. Residues 394-407 (VNSQSNNGSTSASA) show a composition bias toward polar residues. Residues 498-507 (FSNNNNNNHN) are compositionally biased toward low complexity. Over residues 508–526 (LNHHHHHHHHHGHHGHHHA) the composition is skewed to basic residues.

The protein belongs to the MOB1/phocein family. In terms of assembly, interacts with and activates trc, also interacts with wts.

The protein resides in the cytoplasm. The protein localises to the nucleus. Functionally, required for the normal morphogenesis of a variety of polarized outgrowths including epidermal hairs, bristles, arista laterals, and dendrites. The chain is MOB kinase activator-like 2 (Mob2) from Drosophila melanogaster (Fruit fly).